The chain runs to 316 residues: 1-aminocyclopropane-1-carboxylate oxidase 2 (316 aa).

One can recognise a Fe2OG dioxygenase domain in the interval 153–253; the sequence is PNFGTKVSNY…RMSLASFYNP (101 aa). Residues histidine 177, aspartate 179, and histidine 234 each contribute to the Fe cation site.

This sequence belongs to the iron/ascorbate-dependent oxidoreductase family. It depends on Fe cation as a cofactor. In terms of tissue distribution, leaves.

It catalyses the reaction 1-aminocyclopropane-1-carboxylate + L-ascorbate + O2 = ethene + L-dehydroascorbate + hydrogen cyanide + CO2 + 2 H2O. The protein operates within alkene biosynthesis; ethylene biosynthesis via S-adenosyl-L-methionine; ethylene from S-adenosyl-L-methionine: step 2/2. This chain is 1-aminocyclopropane-1-carboxylate oxidase 2 (ACO2), found in Solanum lycopersicum (Tomato).